The sequence spans 309 residues: tRNA pseudouridine synthase B (309 aa).

The active-site Nucleophile is Asp-52.

The protein belongs to the pseudouridine synthase TruB family. Type 1 subfamily.

The catalysed reaction is uridine(55) in tRNA = pseudouridine(55) in tRNA. Functionally, responsible for synthesis of pseudouridine from uracil-55 in the psi GC loop of transfer RNAs. The polypeptide is tRNA pseudouridine synthase B (Leptospira interrogans serogroup Icterohaemorrhagiae serovar copenhageni (strain Fiocruz L1-130)).